A 449-amino-acid chain; its full sequence is Hyaluronidase-1 (449 aa).

The signal sequence occupies residues 1–23 (MYHIWIKFLAAWIFLKRFNGVHV). Intrachain disulfides connect Cys-47-Cys-340 and Cys-211-Cys-227. N-linked (GlcNAc...) asparagine glycans are attached at residues Asn-67, Asn-103, and Asn-111. Glu-135 acts as the Proton donor in catalysis. An N-linked (GlcNAc...) asparagine glycan is attached at Asn-153. N-linked (GlcNAc...) asparagine glycosylation occurs at Asn-357. 3 cysteine pairs are disulfide-bonded: Cys-365/Cys-376, Cys-370/Cys-427, and Cys-429/Cys-438. An N-linked (GlcNAc...) asparagine glycan is attached at Asn-401. In terms of domain architecture, EGF-like spans 427–438 (CQCYQGWKGLYC).

It belongs to the glycosyl hydrolase 56 family. Monomer. Expressed by the venom gland.

Its subcellular location is the secreted. It catalyses the reaction Random hydrolysis of (1-&gt;4)-linkages between N-acetyl-beta-D-glucosamine and D-glucuronate residues in hyaluronate.. Its function is as follows. Snake venom endo-hyaluronidase that degrades hyaluronan to smaller oligosaccharide fragments. In venom, it is not toxic by itself, but increases the diffusion of other venom proteins by degrading the extracellular matrix. In addition, it displays antiedematogenic activity. The protein is Hyaluronidase-1 of Cerastes cerastes (Horned desert viper).